Consider the following 329-residue polypeptide: NADH-quinone oxidoreductase subunit H (329 aa).

The next 9 helical transmembrane spans lie at leucine 9–isoleucine 29, glycine 42–phenylalanine 62, leucine 75–isoleucine 95, isoleucine 117–glycine 137, isoleucine 154–valine 174, glycine 188–alanine 208, leucine 238–isoleucine 258, tryptophan 269–tryptophan 291, and tryptophan 309–isoleucine 329.

It belongs to the complex I subunit 1 family. NDH-1 is composed of 14 different subunits. Subunits NuoA, H, J, K, L, M, N constitute the membrane sector of the complex.

The protein localises to the cell inner membrane. It carries out the reaction a quinone + NADH + 5 H(+)(in) = a quinol + NAD(+) + 4 H(+)(out). NDH-1 shuttles electrons from NADH, via FMN and iron-sulfur (Fe-S) centers, to quinones in the respiratory chain. The immediate electron acceptor for the enzyme in this species is believed to be ubiquinone. Couples the redox reaction to proton translocation (for every two electrons transferred, four hydrogen ions are translocated across the cytoplasmic membrane), and thus conserves the redox energy in a proton gradient. This subunit may bind ubiquinone. This chain is NADH-quinone oxidoreductase subunit H, found in Helicobacter acinonychis (strain Sheeba).